Here is a 193-residue protein sequence, read N- to C-terminus: Potassium-transporting ATPase KdpC subunit (193 aa).

Residues 14 to 34 (ITFTFLVLCGLVYPLIVTGIA) traverse the membrane as a helical segment.

This sequence belongs to the KdpC family. The system is composed of three essential subunits: KdpA, KdpB and KdpC.

It localises to the cell membrane. Its function is as follows. Part of the high-affinity ATP-driven potassium transport (or Kdp) system, which catalyzes the hydrolysis of ATP coupled with the electrogenic transport of potassium into the cytoplasm. This subunit acts as a catalytic chaperone that increases the ATP-binding affinity of the ATP-hydrolyzing subunit KdpB by the formation of a transient KdpB/KdpC/ATP ternary complex. The polypeptide is Potassium-transporting ATPase KdpC subunit (Bacillus mycoides (strain KBAB4) (Bacillus weihenstephanensis)).